We begin with the raw amino-acid sequence, 359 residues long: Protein RecA (359 aa).

Gly64–Thr71 contacts ATP. The segment at Lys329 to Ile359 is disordered. A compositionally biased stretch (basic and acidic residues) spans Ser331–Lys344.

It belongs to the RecA family.

It is found in the cytoplasm. Functionally, can catalyze the hydrolysis of ATP in the presence of single-stranded DNA, the ATP-dependent uptake of single-stranded DNA by duplex DNA, and the ATP-dependent hybridization of homologous single-stranded DNAs. It interacts with LexA causing its activation and leading to its autocatalytic cleavage. This chain is Protein RecA, found in Francisella tularensis subsp. tularensis (strain FSC 198).